We begin with the raw amino-acid sequence, 260 residues long: tRNA (guanine-N(1)-)-methyltransferase (260 aa).

S-adenosyl-L-methionine contacts are provided by residues glycine 117 and 137–142; that span reads LGDFVL.

The protein belongs to the RNA methyltransferase TrmD family. In terms of assembly, homodimer.

Its subcellular location is the cytoplasm. It catalyses the reaction guanosine(37) in tRNA + S-adenosyl-L-methionine = N(1)-methylguanosine(37) in tRNA + S-adenosyl-L-homocysteine + H(+). Specifically methylates guanosine-37 in various tRNAs. The sequence is that of tRNA (guanine-N(1)-)-methyltransferase from Cupriavidus taiwanensis (strain DSM 17343 / BCRC 17206 / CCUG 44338 / CIP 107171 / LMG 19424 / R1) (Ralstonia taiwanensis (strain LMG 19424)).